Here is a 114-residue protein sequence, read N- to C-terminus: MPRSVNAVASRARRKRVIKLAKGYWGRRKNAWTIAKNAVERALQYAYRDRKAKKREFRRLWIQRINAAAKMNGLSYSQFMGKLAASGIELNRKVLADLAMNNPEAFKEILKKVA.

Belongs to the bacterial ribosomal protein bL20 family.

Its function is as follows. Binds directly to 23S ribosomal RNA and is necessary for the in vitro assembly process of the 50S ribosomal subunit. It is not involved in the protein synthesizing functions of that subunit. The polypeptide is Large ribosomal subunit protein bL20 (Amoebophilus asiaticus (strain 5a2)).